Here is a 630-residue protein sequence, read N- to C-terminus: Angiotensin-converting enzyme-related protein (630 aa).

Positions 1 to 22 (MGACNITVLLLVIMLWLPHGLS) are cleaved as a signal peptide. Residues 28 to 615 (SASVLEARRF…SRLGVPLGWG (588 aa)) enclose the Peptidase M2 domain. 2 disulfides stabilise this stretch: Cys-142-Cys-150 and Cys-344-Cys-362. His-375 provides a ligand contact to Zn(2+). The active-site Proton acceptor is Glu-376. Zn(2+) is bound by residues His-379 and Glu-403. His-505 functions as the Proton donor in the catalytic mechanism. Cys-530 and Cys-548 are oxidised to a cystine.

The protein belongs to the peptidase M2 family. It depends on Zn(2+) as a cofactor. Glycosylated.

It is found in the secreted. It localises to the extracellular space. It carries out the reaction Release of a C-terminal dipeptide, oligopeptide-|-Xaa-Yaa, when Xaa is not Pro, and Yaa is neither Asp nor Glu. Thus, conversion of angiotensin I to angiotensin II, with increase in vasoconstrictor activity, but no action on angiotensin II.. Its activity is regulated as follows. Inhibited by captopril, lisinopril, trandolaprilat, fosinoprilat and enalaprilat. In terms of biological role, may be involved in the specific maturation or degradation of a number of bioactive peptides. May have a role in the specification of heart progenitors. The sequence is that of Angiotensin-converting enzyme-related protein (Acer) from Drosophila melanogaster (Fruit fly).